The primary structure comprises 739 residues: Phosphoribosylformylglycinamidine synthase subunit PurL (739 aa).

His-54 is a catalytic residue. The ATP site is built by Tyr-57 and Lys-96. A Mg(2+)-binding site is contributed by Glu-98. Substrate-binding positions include 99 to 102 (SHNH) and Arg-121. The active-site Proton acceptor is His-100. Mg(2+) is bound at residue Asp-122. Gln-245 lines the substrate pocket. Asp-273 lines the Mg(2+) pocket. Residue 317 to 319 (ESQ) participates in substrate binding. ATP-binding residues include Asp-500 and Gly-537. Asn-538 provides a ligand contact to Mg(2+). Ser-540 contacts substrate.

The protein belongs to the FGAMS family. Monomer. Part of the FGAM synthase complex composed of 1 PurL, 1 PurQ and 2 PurS subunits.

It is found in the cytoplasm. It catalyses the reaction N(2)-formyl-N(1)-(5-phospho-beta-D-ribosyl)glycinamide + L-glutamine + ATP + H2O = 2-formamido-N(1)-(5-O-phospho-beta-D-ribosyl)acetamidine + L-glutamate + ADP + phosphate + H(+). It functions in the pathway purine metabolism; IMP biosynthesis via de novo pathway; 5-amino-1-(5-phospho-D-ribosyl)imidazole from N(2)-formyl-N(1)-(5-phospho-D-ribosyl)glycinamide: step 1/2. Part of the phosphoribosylformylglycinamidine synthase complex involved in the purines biosynthetic pathway. Catalyzes the ATP-dependent conversion of formylglycinamide ribonucleotide (FGAR) and glutamine to yield formylglycinamidine ribonucleotide (FGAM) and glutamate. The FGAM synthase complex is composed of three subunits. PurQ produces an ammonia molecule by converting glutamine to glutamate. PurL transfers the ammonia molecule to FGAR to form FGAM in an ATP-dependent manner. PurS interacts with PurQ and PurL and is thought to assist in the transfer of the ammonia molecule from PurQ to PurL. This is Phosphoribosylformylglycinamidine synthase subunit PurL from Bacillus cereus (strain ATCC 10987 / NRS 248).